The chain runs to 332 residues: tRNA-dihydrouridine(20/20a) synthase (332 aa).

FMN is bound by residues 20–22 (PMM) and Gln-73. The active-site Proton donor is Cys-103. FMN-binding positions include Lys-142, His-174, 214–216 (NGG), and 236–237 (GR).

Belongs to the Dus family. DusA subfamily. The cofactor is FMN.

The catalysed reaction is 5,6-dihydrouridine(20) in tRNA + NADP(+) = uridine(20) in tRNA + NADPH + H(+). The enzyme catalyses 5,6-dihydrouridine(20) in tRNA + NAD(+) = uridine(20) in tRNA + NADH + H(+). It catalyses the reaction 5,6-dihydrouridine(20a) in tRNA + NADP(+) = uridine(20a) in tRNA + NADPH + H(+). It carries out the reaction 5,6-dihydrouridine(20a) in tRNA + NAD(+) = uridine(20a) in tRNA + NADH + H(+). Catalyzes the synthesis of 5,6-dihydrouridine (D), a modified base found in the D-loop of most tRNAs, via the reduction of the C5-C6 double bond in target uridines. Specifically modifies U20 and U20a in tRNAs. This chain is tRNA-dihydrouridine(20/20a) synthase, found in Pseudomonas aeruginosa (strain ATCC 15692 / DSM 22644 / CIP 104116 / JCM 14847 / LMG 12228 / 1C / PRS 101 / PAO1).